Reading from the N-terminus, the 411-residue chain is Tyrosine--tRNA ligase (411 aa).

An L-tyrosine-binding site is contributed by Tyr34. The short motif at 39 to 48 (CTATSLHIGS) is the 'HIGH' region element. L-tyrosine contacts are provided by Tyr171 and Gln175. Residues 231-235 (KMGKT) carry the 'KMSKS' region motif. Lys234 contacts ATP. Residues 345-411 (ISAYELFHEA…GKKRHILVRV (67 aa)) form the S4 RNA-binding domain.

It belongs to the class-I aminoacyl-tRNA synthetase family. TyrS type 1 subfamily. As to quaternary structure, homodimer.

It is found in the cytoplasm. It catalyses the reaction tRNA(Tyr) + L-tyrosine + ATP = L-tyrosyl-tRNA(Tyr) + AMP + diphosphate + H(+). Its function is as follows. Catalyzes the attachment of tyrosine to tRNA(Tyr) in a two-step reaction: tyrosine is first activated by ATP to form Tyr-AMP and then transferred to the acceptor end of tRNA(Tyr). This chain is Tyrosine--tRNA ligase, found in Rickettsia massiliae (strain Mtu5).